The sequence spans 233 residues: Large ribosomal subunit protein uL1 (233 aa).

Belongs to the universal ribosomal protein uL1 family. Part of the 50S ribosomal subunit.

Binds directly to 23S rRNA. The L1 stalk is quite mobile in the ribosome, and is involved in E site tRNA release. In terms of biological role, protein L1 is also a translational repressor protein, it controls the translation of the L11 operon by binding to its mRNA. The chain is Large ribosomal subunit protein uL1 from Syntrophomonas wolfei subsp. wolfei (strain DSM 2245B / Goettingen).